Reading from the N-terminus, the 345-residue chain is Phosphoribosylformylglycinamidine cyclo-ligase (345 aa).

Belongs to the AIR synthase family.

The protein localises to the cytoplasm. It catalyses the reaction 2-formamido-N(1)-(5-O-phospho-beta-D-ribosyl)acetamidine + ATP = 5-amino-1-(5-phospho-beta-D-ribosyl)imidazole + ADP + phosphate + H(+). The protein operates within purine metabolism; IMP biosynthesis via de novo pathway; 5-amino-1-(5-phospho-D-ribosyl)imidazole from N(2)-formyl-N(1)-(5-phospho-D-ribosyl)glycinamide: step 2/2. In Escherichia coli (strain 55989 / EAEC), this protein is Phosphoribosylformylglycinamidine cyclo-ligase.